Here is a 227-residue protein sequence, read N- to C-terminus: Ornithine decarboxylase antizyme 1 (227 aa).

Positions 20 to 50 are disordered; it reads EGDKPSATVHATRTMPLLSLHSRGGRSSESS. A compositionally biased stretch (low complexity) spans 36-50; it reads LLSLHSRGGRSSESS.

Belongs to the ODC antizyme family. In terms of assembly, interacts with ODC1 and thereby sterically blocks ODC homodimerization. Forms a ternary complex with PSMB4 and OAZ1 before PSMB4 is incorporated into the 20S proteasome. Interacts with AZIN2; this interaction disrupts the interaction between the antizyme and ODC1. Interacts with FAM171A1.

In terms of biological role, ornithine decarboxylase (ODC) antizyme protein that negatively regulates ODC activity and intracellular polyamine biosynthesis and uptake in response to increased intracellular polyamine levels. Binds to ODC monomers, inhibiting the assembly of the functional ODC homodimer, and targets the monomers for ubiquitin-independent proteolytic destruction by the 26S proteasome. Triggers ODC degradation by inducing the exposure of a cryptic proteasome-interacting surface of ODC. Stabilizes AZIN2 by interfering with its ubiquitination. Also inhibits cellular uptake of polyamines by inactivating the polyamine uptake transporter. SMAD1/OAZ1/PSMB4 complex mediates the degradation of the CREBBP/EP300 repressor SNIP1. Involved in the translocation of AZIN2 from ER-Golgi intermediate compartment (ERGIC) to the cytosol. In Bos taurus (Bovine), this protein is Ornithine decarboxylase antizyme 1 (OAZ1).